Reading from the N-terminus, the 216-residue chain is Large ribosomal subunit protein uL3 (216 aa).

A compositionally biased stretch (polar residues) spans 133-145 (GRATHGNSRSHNV). A disordered region spans residues 133-153 (GRATHGNSRSHNVPGSIGMAQ). Gln-153 carries the post-translational modification N5-methylglutamine.

This sequence belongs to the universal ribosomal protein uL3 family. In terms of assembly, part of the 50S ribosomal subunit. Forms a cluster with proteins L14 and L19. Post-translationally, methylated by PrmB.

In terms of biological role, one of the primary rRNA binding proteins, it binds directly near the 3'-end of the 23S rRNA, where it nucleates assembly of the 50S subunit. This chain is Large ribosomal subunit protein uL3, found in Burkholderia cenocepacia (strain ATCC BAA-245 / DSM 16553 / LMG 16656 / NCTC 13227 / J2315 / CF5610) (Burkholderia cepacia (strain J2315)).